A 231-amino-acid polypeptide reads, in one-letter code: MAKRIGLFLEKVGHTAIFDNEGKRIPVTLLHLRDSFIISTKTKDINGYNAVVLGVESSVNIKKPQLKILEKSNITAKCRIFESRVDNLDGIVKGAKISITHFVENQYIDVTGYSLGKGFAGVMKRHNFKGLKASHGVSIAHRSQGSTGQCQDPGRVYKGKKMAGHLGSSKVTVQNLKVILVDQERSLLVVKGNNIPGAKGSYVFVKDAVKKSVPKNSFPVCTEDLKLDNIV.

Gln151 carries the N5-methylglutamine modification.

The protein belongs to the universal ribosomal protein uL3 family. In terms of assembly, part of the 50S ribosomal subunit. Forms a cluster with proteins L14 and L19. Methylated by PrmB.

One of the primary rRNA binding proteins, it binds directly near the 3'-end of the 23S rRNA, where it nucleates assembly of the 50S subunit. This is Large ribosomal subunit protein uL3 from Ehrlichia canis (strain Jake).